The chain runs to 324 residues: Interleukin-12 subunit beta (324 aa).

The N-terminal stretch at 1 to 22 is a signal peptide; sequence MHLQQLVVSWFSLVWLASPIVA. Residues 23-106 enclose the Ig-like C2-type domain; that stretch reads IWELEKNVYV…LSQSLLLLHK (84 aa). A disulfide bridge connects residues Cys50 and Cys90. 3 N-linked (GlcNAc...) asparagine glycosylation sites follow: Asn125, Asn135, and Asn218. One can recognise a Fibronectin type-III domain in the interval 233–324; it reads PPKNLQLNPL…WSEWASVSCN (92 aa).

It belongs to the IL-12B family. As to quaternary structure, heterodimer with IL12A; disulfide-linked. The heterodimer is known as interleukin IL-12. Heterodimer with IL23A; disulfide-linked. The heterodimer is known as interleukin IL-23. Also secreted as a monomer. Interacts with NBR1; this interaction promotes IL-12 secretion.

The protein resides in the secreted. Functionally, cytokine that can act as a growth factor for activated T and NK cells, enhance the lytic activity of NK/lymphokine-activated killer cells, and stimulate the production of IFN-gamma by resting PBMC. Its function is as follows. Associates with IL23A to form the IL-23 interleukin, a heterodimeric cytokine which functions in innate and adaptive immunity. IL-23 may constitute with IL-17 an acute response to infection in peripheral tissues. IL-23 binds to a heterodimeric receptor complex composed of IL12RB1 and IL23R, activates the Jak-Stat signaling cascade, stimulates memory rather than naive T-cells and promotes production of pro-inflammatory cytokines. IL-23 induces autoimmune inflammation and thus may be responsible for autoimmune inflammatory diseases and may be important for tumorigenesis. This is Interleukin-12 subunit beta (IL12B) from Sus scrofa (Pig).